The sequence spans 209 residues: Tektin bundle-interacting protein 1 (209 aa).

In terms of assembly, microtubule inner protein component of sperm flagellar doublet microtubules.

Its subcellular location is the cytoplasm. It is found in the cytoskeleton. The protein localises to the cilium axoneme. It localises to the flagellum axoneme. Functionally, microtubule inner protein (MIP) part of the dynein-decorated doublet microtubules (DMTs) in cilia axoneme, which is required for motile cilia beating. Located at the center of the tektin bundle where may function to recruit tektins or stabilize the bundle. This chain is Tektin bundle-interacting protein 1, found in Homo sapiens (Human).